Reading from the N-terminus, the 405-residue chain is MANVLMIGFPGEGHINPSIGVMKELKSRGENITYYAVKEYKEKITALDIEFREYHDFRGDYFGKNATGDEERDFTEMLCAFLKACKDIATHIYEEVKHESYDYVIYDHHLLAGKVIANMLKLPRFSLCTTFAMNEEFAKEMMGAYMKGSLEDSPHYESYQQLAETLNADFQAEIKKPFDVFLADGDLTIVFTSRGFQPLAEQFGERYVFVGPSITERAGNNDFPFDQIDNENVLFISMGTIFNNQKQFFNQCLEVCKDFDGKVVLSIGKHIKTSELNDIPENFIVRPYVPQLEILKRASLFVTHGGMNSTSEGLYFETPLVVIPMGGDQFVVADQVEKVGAGKVIKKEELSESLLKETIQEVMNNRSYAEKAKEIGQSLKAAGGSKKAADSILEAVKQKTQSANA.

The protein belongs to the UDP-glycosyltransferase family.

This is an uncharacterized protein from Bacillus subtilis (strain 168).